Consider the following 339-residue polypeptide: Tetraacyldisaccharide 4'-kinase (339 aa).

ATP is bound at residue 58 to 65; sequence NVGGVGKT.

It belongs to the LpxK family.

It catalyses the reaction a lipid A disaccharide + ATP = a lipid IVA + ADP + H(+). It participates in glycolipid biosynthesis; lipid IV(A) biosynthesis; lipid IV(A) from (3R)-3-hydroxytetradecanoyl-[acyl-carrier-protein] and UDP-N-acetyl-alpha-D-glucosamine: step 6/6. Transfers the gamma-phosphate of ATP to the 4'-position of a tetraacyldisaccharide 1-phosphate intermediate (termed DS-1-P) to form tetraacyldisaccharide 1,4'-bis-phosphate (lipid IVA). This is Tetraacyldisaccharide 4'-kinase from Chromobacterium violaceum (strain ATCC 12472 / DSM 30191 / JCM 1249 / CCUG 213 / NBRC 12614 / NCIMB 9131 / NCTC 9757 / MK).